The primary structure comprises 409 residues: Tryptophan synthase beta chain (409 aa).

Position 86 is an N6-(pyridoxal phosphate)lysine (Lys86).

The protein belongs to the TrpB family. In terms of assembly, tetramer of two alpha and two beta chains. Pyridoxal 5'-phosphate serves as cofactor.

The enzyme catalyses (1S,2R)-1-C-(indol-3-yl)glycerol 3-phosphate + L-serine = D-glyceraldehyde 3-phosphate + L-tryptophan + H2O. Its pathway is amino-acid biosynthesis; L-tryptophan biosynthesis; L-tryptophan from chorismate: step 5/5. Functionally, the beta subunit is responsible for the synthesis of L-tryptophan from indole and L-serine. This Shewanella pealeana (strain ATCC 700345 / ANG-SQ1) protein is Tryptophan synthase beta chain.